The primary structure comprises 631 residues: uncharacterized protein (631 aa).

This is an uncharacterized protein from Escherichia coli (strain K12).